We begin with the raw amino-acid sequence, 217 residues long: Large ribosomal subunit protein uL3 (217 aa).

The segment at 127-162 is disordered; the sequence is GFSRGPMSHGSKNHRAPGSTGAGTTPGRIYPGKRMA. A compositionally biased stretch (low complexity) spans 142 to 153; that stretch reads APGSTGAGTTPG.

It belongs to the universal ribosomal protein uL3 family. In terms of assembly, part of the 50S ribosomal subunit. Forms a cluster with proteins L14 and L19.

In terms of biological role, one of the primary rRNA binding proteins, it binds directly near the 3'-end of the 23S rRNA, where it nucleates assembly of the 50S subunit. The protein is Large ribosomal subunit protein uL3 of Prochlorococcus marinus (strain AS9601).